Reading from the N-terminus, the 340-residue chain is Uroporphyrinogen decarboxylase (340 aa).

Substrate contacts are provided by residues 21 to 25 (RQAGR), Phe40, Asp71, Tyr147, Ser202, and His316.

It belongs to the uroporphyrinogen decarboxylase family. In terms of assembly, homodimer.

It localises to the cytoplasm. The catalysed reaction is uroporphyrinogen III + 4 H(+) = coproporphyrinogen III + 4 CO2. Its pathway is porphyrin-containing compound metabolism; protoporphyrin-IX biosynthesis; coproporphyrinogen-III from 5-aminolevulinate: step 4/4. Its function is as follows. Catalyzes the decarboxylation of four acetate groups of uroporphyrinogen-III to yield coproporphyrinogen-III. This chain is Uroporphyrinogen decarboxylase, found in Helicobacter hepaticus (strain ATCC 51449 / 3B1).